Consider the following 403-residue polypeptide: MRRNDLLNNKITIFLSSLSLFVIIIPIYAAEKDLLPPSTSSETFLTDEDFLRPLNDDETFLTEKDFKNGEKLGEDHVPAGSILWKQVYKKGDIRGKAAWKLDPKNSESLRRNGVITGTRKWPNGRIPYVISNQYNDRERAVLARSFQAYHDKTCVRFVPRTAVDNDYLYIGKIDGCYSDVGRAGGRQELSLDNGCLQYDTAIHELMHSVGFYHEHERWDRDEHITILWHNIDREAYDQFGKVDLAESSYYGQLYDYYSIMHYDSLAFSKNGFETMVAKQSEMTAVIGAAIDFSPIDILKMNLMYQCSDVKLPPTVVGTTDKTIVPVPAPSVTVVEDDCRDRTNLCWRWIDRCKSFFFEQIMKEFCSLSCGYCTPKALQTAKASPPNYSNTLLTKSSTSYLQHG.

Residues Met1–Ala29 form the signal peptide. Positions Ala30 to Arg111 are excised as a propeptide. The Peptidase M12A domain occupies Asn112–Ser307. 5 disulfides stabilise this stretch: Cys154/Cys306, Cys176/Cys195, Cys338/Cys372, Cys345/Cys365, and Cys352/Cys369. His203 contributes to the Zn(2+) binding site. Residue Glu204 is part of the active site. His207 and His213 together coordinate Zn(2+). One can recognise a ShKT domain in the interval Cys338–Cys372. The N-linked (GlcNAc...) asparagine glycan is linked to Asn386.

The cofactor is Zn(2+).

It localises to the secreted. It carries out the reaction Hydrolysis of peptide bonds in substrates containing five or more amino acids, preferentially with Ala in P1', and Pro in P2'.. Its function is as follows. Metalloprotease. The sequence is that of Zinc metalloproteinase nas-8 (nas-8) from Caenorhabditis elegans.